The sequence spans 480 residues: Ribulose bisphosphate carboxylase large chain (480 aa).

Positions 1-2 (MS) are excised as a propeptide. Position 3 is an N-acetylproline (proline 3). Position 14 is an N6,N6,N6-trimethyllysine (lysine 14). 2 residues coordinate substrate: asparagine 123 and threonine 173. Lysine 175 acts as the Proton acceptor in catalysis. Lysine 177 is a binding site for substrate. Positions 201, 203, and 204 each coordinate Mg(2+). Lysine 201 is modified (N6-carboxylysine). Histidine 294 acts as the Proton acceptor in catalysis. Substrate-binding residues include arginine 295, histidine 327, and serine 379.

The protein belongs to the RuBisCO large chain family. Type I subfamily. Heterohexadecamer of 8 large chains and 8 small chains; disulfide-linked. The disulfide link is formed within the large subunit homodimers. Mg(2+) is required as a cofactor. The disulfide bond which can form in the large chain dimeric partners within the hexadecamer appears to be associated with oxidative stress and protein turnover.

It is found in the plastid. The protein resides in the chloroplast. The enzyme catalyses 2 (2R)-3-phosphoglycerate + 2 H(+) = D-ribulose 1,5-bisphosphate + CO2 + H2O. It catalyses the reaction D-ribulose 1,5-bisphosphate + O2 = 2-phosphoglycolate + (2R)-3-phosphoglycerate + 2 H(+). Its function is as follows. RuBisCO catalyzes two reactions: the carboxylation of D-ribulose 1,5-bisphosphate, the primary event in carbon dioxide fixation, as well as the oxidative fragmentation of the pentose substrate in the photorespiration process. Both reactions occur simultaneously and in competition at the same active site. The chain is Ribulose bisphosphate carboxylase large chain from Phalaenopsis aphrodite subsp. formosana (Moth orchid).